Here is a 350-residue protein sequence, read N- to C-terminus: Hydroxymethylglutaryl-CoA synthase (350 aa).

(3S)-3-hydroxy-3-methylglutaryl-CoA-binding residues include aspartate 33 and valine 34. Residue glutamate 85 is the Proton donor/acceptor of the active site. Cysteine 117 and threonine 158 together coordinate (3S)-3-hydroxy-3-methylglutaryl-CoA. Catalysis depends on cysteine 117, which acts as the Acyl-thioester intermediate. Arginine 204 lines the CoA pocket. (3S)-3-hydroxy-3-methylglutaryl-CoA contacts are provided by threonine 206 and histidine 239. Histidine 239 acts as the Proton donor/acceptor in catalysis. Lysine 244 provides a ligand contact to CoA. The (3S)-3-hydroxy-3-methylglutaryl-CoA site is built by lysine 248, asparagine 271, and serine 301.

This sequence belongs to the thiolase-like superfamily. Archaeal HMG-CoA synthase family. Interacts with acetoacetyl-CoA thiolase that catalyzes the precedent step in the pathway and with a DUF35 protein. The acetoacetyl-CoA thiolase/HMG-CoA synthase complex channels the intermediate via a fused CoA-binding site, which allows for efficient coupling of the endergonic thiolase reaction with the exergonic HMGCS reaction.

It carries out the reaction acetoacetyl-CoA + acetyl-CoA + H2O = (3S)-3-hydroxy-3-methylglutaryl-CoA + CoA + H(+). Its pathway is metabolic intermediate biosynthesis; (R)-mevalonate biosynthesis; (R)-mevalonate from acetyl-CoA: step 2/3. In terms of biological role, catalyzes the condensation of acetyl-CoA with acetoacetyl-CoA to form 3-hydroxy-3-methylglutaryl-CoA (HMG-CoA). Functions in the mevalonate (MVA) pathway leading to isopentenyl diphosphate (IPP), a key precursor for the biosynthesis of isoprenoid compounds that are building blocks of archaeal membrane lipids. The protein is Hydroxymethylglutaryl-CoA synthase of Methanopyrus kandleri (strain AV19 / DSM 6324 / JCM 9639 / NBRC 100938).